An 863-amino-acid chain; its full sequence is Leucine--tRNA ligase (863 aa).

A 'HIGH' region motif is present at residues 42-52 (PYPSGRLHMGH). Residues 622–626 (KMSKS) carry the 'KMSKS' region motif. Lys-625 is an ATP binding site.

The protein belongs to the class-I aminoacyl-tRNA synthetase family.

The protein localises to the cytoplasm. It catalyses the reaction tRNA(Leu) + L-leucine + ATP = L-leucyl-tRNA(Leu) + AMP + diphosphate. In Shewanella frigidimarina (strain NCIMB 400), this protein is Leucine--tRNA ligase.